A 550-amino-acid polypeptide reads, in one-letter code: Cytochrome P450 monooxygenase hasH (550 aa).

Residues 39-59 (IGVLASIVVLVTVVIGPKAVI) form a helical membrane-spanning segment. Cys-493 is a binding site for heme.

Belongs to the cytochrome P450 family. The cofactor is heme.

The protein resides in the membrane. It functions in the pathway secondary metabolite biosynthesis. Its function is as follows. Cytochrome P450 monooxygenase; part of the gene cluster that mediates the biosynthesis of hexadehydro-astechrome (HAS), a tryptophan-derived iron(III)-complex that acts as a virulence factor in infected mice. Within the pathway, hasH, with the O-methyltransferase hasC and the FAD-linked oxidoreductase hasG, convert the hasE-prenylated Trp-Ala dipeptide into an O-methylated diketopiperazine that is then released from the hasD NRPS. The HAS biosynthesis begins with the synthesis of a tethered Trp-Ala dipeptide by the NRPS hasD. The 7-dimethylallyltryptophan synthase hasE then catalyzes the prenylation of the hasD-tethered tryptophan or the resulting tethered Trp-Ala dipeptide at the C-7 position of the indole moiety. HAS biosynthesis continues via tethered intermediates with the succesive action of the cytochrome P450 monooxygenase hasH, the O-methyltransferase hasC, and the FAD-linked oxidoreductase hasG. The resulting O-methylated diketopiperazine is then released from hasD. Finally, three O-methylated diketopiperazine molecules assemble in a trimeric complex with Fe(III) to produce hexadehydro-astechrome. The sequence is that of Cytochrome P450 monooxygenase hasH from Aspergillus fumigatus (strain CBS 144.89 / FGSC A1163 / CEA10) (Neosartorya fumigata).